The primary structure comprises 171 residues: 2-C-methyl-D-erythritol 2,4-cyclodiphosphate synthase (171 aa).

A divalent metal cation is bound by residues Asp8 and His10. 4-CDP-2-C-methyl-D-erythritol 2-phosphate contacts are provided by residues 8–10 and 34–35; these read DVH and HS. His42 is an a divalent metal cation binding site. 4-CDP-2-C-methyl-D-erythritol 2-phosphate is bound by residues 56–58, 61–65, 132–135, Phe139, and Arg142; these read DIG, FPDTD, and TTTE.

This sequence belongs to the IspF family. As to quaternary structure, homotrimer. It depends on a divalent metal cation as a cofactor.

It catalyses the reaction 4-CDP-2-C-methyl-D-erythritol 2-phosphate = 2-C-methyl-D-erythritol 2,4-cyclic diphosphate + CMP. Its pathway is isoprenoid biosynthesis; isopentenyl diphosphate biosynthesis via DXP pathway; isopentenyl diphosphate from 1-deoxy-D-xylulose 5-phosphate: step 4/6. Its function is as follows. Involved in the biosynthesis of isopentenyl diphosphate (IPP) and dimethylallyl diphosphate (DMAPP), two major building blocks of isoprenoid compounds. Catalyzes the conversion of 4-diphosphocytidyl-2-C-methyl-D-erythritol 2-phosphate (CDP-ME2P) to 2-C-methyl-D-erythritol 2,4-cyclodiphosphate (ME-CPP) with a corresponding release of cytidine 5-monophosphate (CMP). The chain is 2-C-methyl-D-erythritol 2,4-cyclodiphosphate synthase from Geotalea daltonii (strain DSM 22248 / JCM 15807 / FRC-32) (Geobacter daltonii).